Consider the following 251-residue polypeptide: Octanoyltransferase (251 aa).

In terms of domain architecture, BPL/LPL catalytic spans 49–230 (DEIADQILVL…DLDDAFAGRL (182 aa)). Substrate is bound by residues 87–94 (RGGRITWH), 160–162 (ALG), and 173–175 (GLA). The Acyl-thioester intermediate role is filled by cysteine 191.

It belongs to the LipB family.

Its subcellular location is the cytoplasm. It carries out the reaction octanoyl-[ACP] + L-lysyl-[protein] = N(6)-octanoyl-L-lysyl-[protein] + holo-[ACP] + H(+). It participates in protein modification; protein lipoylation via endogenous pathway; protein N(6)-(lipoyl)lysine from octanoyl-[acyl-carrier-protein]: step 1/2. Its function is as follows. Catalyzes the transfer of endogenously produced octanoic acid from octanoyl-acyl-carrier-protein onto the lipoyl domains of lipoate-dependent enzymes. Lipoyl-ACP can also act as a substrate although octanoyl-ACP is likely to be the physiological substrate. The protein is Octanoyltransferase of Corynebacterium efficiens (strain DSM 44549 / YS-314 / AJ 12310 / JCM 11189 / NBRC 100395).